A 300-amino-acid chain; its full sequence is D-alanine--D-alanine ligase (300 aa).

In terms of domain architecture, ATP-grasp spans 99–293 (KKILKYANIN…FAELLNSIVK (195 aa)). 126 to 181 (IEKIGYPVFVKPNSGGSSVATNLVKNKEGIKEAVELALKYDKEVMIENYTKGEEIT) serves as a coordination point for ATP. Mg(2+) contacts are provided by D248, E260, and N262.

Belongs to the D-alanine--D-alanine ligase family. Mg(2+) serves as cofactor. Requires Mn(2+) as cofactor.

The protein resides in the cytoplasm. The enzyme catalyses 2 D-alanine + ATP = D-alanyl-D-alanine + ADP + phosphate + H(+). It functions in the pathway cell wall biogenesis; peptidoglycan biosynthesis. Functionally, cell wall formation. The polypeptide is D-alanine--D-alanine ligase (Clostridium botulinum (strain Loch Maree / Type A3)).